The following is a 631-amino-acid chain: Translation factor GUF1, mitochondrial (631 aa).

The transit peptide at 1-19 directs the protein to the mitochondrion; it reads MFNRRLLRHVRYAFQQVRS. Residues 33–214 form the tr-type G domain; it reads ERYRNFSIVA…AIVDRIPPPT (182 aa). Residues 42–49, 107–111, and 161–164 contribute to the GTP site; these read AHVDHGKS, DTPGH, and NKID.

Belongs to the TRAFAC class translation factor GTPase superfamily. Classic translation factor GTPase family. LepA subfamily.

The protein resides in the mitochondrion inner membrane. It carries out the reaction GTP + H2O = GDP + phosphate + H(+). In terms of biological role, promotes mitochondrial protein synthesis. May act as a fidelity factor of the translation reaction, by catalyzing a one-codon backward translocation of tRNAs on improperly translocated ribosomes. Binds to mitochondrial ribosomes in a GTP-dependent manner. This chain is Translation factor GUF1, mitochondrial, found in Kluyveromyces lactis (strain ATCC 8585 / CBS 2359 / DSM 70799 / NBRC 1267 / NRRL Y-1140 / WM37) (Yeast).